Consider the following 452-residue polypeptide: Probable alpha-galactosidase B (452 aa).

The N-terminal stretch at 1 to 24 (MLHRATTTAAAAAAAALLLCPVQA) is a signal peptide. Cysteines 47 and 79 form a disulfide. N-linked (GlcNAc...) asparagine glycosylation is found at Asn-87 and Asn-138. A disulfide bond links Cys-129 and Cys-159. Asp-157 functions as the Nucleophile in the catalytic mechanism. An N-linked (GlcNAc...) asparagine glycan is attached at Asn-184. Residue 231–235 (DWGQA) participates in substrate binding. The Proton donor role is filled by Asp-253. 4 N-linked (GlcNAc...) asparagine glycosylation sites follow: Asn-292, Asn-391, Asn-409, and Asn-410.

The protein belongs to the glycosyl hydrolase 27 family.

Its subcellular location is the secreted. It carries out the reaction Hydrolysis of terminal, non-reducing alpha-D-galactose residues in alpha-D-galactosides, including galactose oligosaccharides, galactomannans and galactolipids.. In terms of biological role, hydrolyzes a variety of simple alpha-D-galactoside as well as more complex molecules such as oligosaccharides and polysaccharides. This Talaromyces emersonii (Thermophilic fungus) protein is Probable alpha-galactosidase B.